A 1030-amino-acid polypeptide reads, in one-letter code: MTIAEIRKFAQTTQKFVEAENLFEHGNVVLPKKYLNKARGMAEVLYNSQVIKVSFTAKDGELTCKCSCLANVDNCVHIVAVLLKYHQMLVESKRSFNLAEAFHLDCDQAEMLIENLSLEIIAGGWNFKLGFTINLDKHNPQPSVLRFYCCDATFVYFLHLENDTLHSVELSKFKPEERATLLFFDKLCKQFTVGYDRNSLLFPLAGFLKELQANTEPTIFVFNDDKIDNILFLRISKKHHGLNHVCGFSGKKVFDFVTYKQKEKQIVLRSAYLSKFTDFKFPYTINIYKLQFGEPLFFYFLIQLKRDGFKNFYFQSEDSIVKEKEYLPKLYFKVEYDPVKNKFVSDAFFKYKNHFNKGTTTVYPHRYYMAKKSDRGGFNRLLFYEEAVENFYQDQFDLGYFRKFEHLPIQDKNQIEAFKAALDDLMPVDLAEVSLSDNLLHQKPLHFALSDLEAVAVDDKQIKLSFAPSAVELKLIKRILSAYHKGNVVCIDQESWYDLKQPAAKELIQFWNQFDLRNATSDGNHIYLPKYYLFEVAKIFSQYLDIKNLFDVPTIKKIEDQNNNVFDLSLEHKKITSLRNYQQEGVKWIRGLEENKFGGILADEMGLGKTVQVIFALLDSYLKNHVNLPSLIIVPASLLLNWKSEFEKFAPQIKVKVANIPSKERGELYEKLTNEILIVSFNVLRSDVKLITKQRFHYVVIDEAQGIKNDSSSITKAAKKVKGNFCLALTGTPIENRLLDLWSCFDFVLPSFLGNKKQFTDQFEKEKTDQSFHLLMQRTSPFILRRTKSKVLKELPNKITTDIYVELNPMHQKLYEEERDRGLEEIKQIQDKSSFNILTLILKLRHLCSLPKNSQGILENSAKKEAALEIIHEAIENQRKIILFTQFIDVIDHFKDTFKEQGIEYFIFDGRKSPKSRHSIIEKFNNAKNPCVLLASLKAGGVGINLTAAEVVIHFDVWWNTAVENQATDRAHRIGQKKTVQVYRIIAKNTIEERVCQVQAEKQELVSKTLVEDVNFFESLTNEELLRLFE.

The SWIM-type zinc-finger motif lies at 51 to 86; that stretch reads IKVSFTAKDGELTCKCSCLANVDNCVHIVAVLLKYH. One can recognise a Helicase ATP-binding domain in the interval 590–751; sequence RGLEENKFGG…WSCFDFVLPS (162 aa). Residue 603–610 participates in ATP binding; sequence DEMGLGKT. The short motif at 702–705 is the DEAQ box element; that stretch reads DEAQ. In terms of domain architecture, Helicase C-terminal spans 867-1021; the sequence is ALEIIHEAIE…EDVNFFESLT (155 aa).

It belongs to the SNF2/RAD54 helicase family.

This is an uncharacterized protein from Mycoplasma pneumoniae (strain ATCC 29342 / M129 / Subtype 1) (Mycoplasmoides pneumoniae).